The primary structure comprises 327 residues: Phenylalanine--tRNA ligase alpha subunit (327 aa).

Glu252 provides a ligand contact to Mg(2+).

It belongs to the class-II aminoacyl-tRNA synthetase family. Phe-tRNA synthetase alpha subunit type 1 subfamily. As to quaternary structure, tetramer of two alpha and two beta subunits. Mg(2+) serves as cofactor.

The protein localises to the cytoplasm. It catalyses the reaction tRNA(Phe) + L-phenylalanine + ATP = L-phenylalanyl-tRNA(Phe) + AMP + diphosphate + H(+). This Shigella flexneri protein is Phenylalanine--tRNA ligase alpha subunit.